A 167-amino-acid chain; its full sequence is MNRPAPVEISYENMRFLITHNPTNATLNKFTEELKKYGVTTLVRVCDATYDKAPVEKEGIHVLDWPFDDGAPPPNQIVDDWLNLLKTKFREEPGCCVAVHCVAGLGRAPVLVALALIECGMKYEDAVQFIRQKRRGAFNSKQLLYLEKYRPKMRLRFRDTNGHCCVQ.

The 154-residue stretch at 5–158 (APVEISYENM…YRPKMRLRFR (154 aa)) folds into the Tyrosine-protein phosphatase domain. Cys46 and Cys101 are joined by a disulfide. Catalysis depends on Asp69, which acts as the Proton donor. Cys101 functions as the Phosphocysteine intermediate in the catalytic mechanism. A phosphate-binding site is contributed by 102-107 (VAGLGR). Arg107 contributes to the substrate binding site. The residue at position 164 (Cys164) is a Cysteine methyl ester. Cys164 carries the S-farnesyl cysteine lipid modification. A propeptide spans 165–167 (CVQ) (removed in mature form).

The protein belongs to the protein-tyrosine phosphatase family. As to quaternary structure, in contrast to PTP4A1 and PTP4A3, does not interact with tubulin. Interacts with RABGGTB. Post-translationally, farnesylated. Farnesylation is required for membrane targeting and for interaction with RABGGTB. Expressed in skeletal muscle, and at lower levels in liver, lung, heart, kidney, brain, testis and spleen.

Its subcellular location is the cell membrane. The protein localises to the early endosome. It is found in the cytoplasm. The enzyme catalyses O-phospho-L-tyrosyl-[protein] + H2O = L-tyrosyl-[protein] + phosphate. Inhibited by sodium orthovanadate and pentamidine. Protein tyrosine phosphatase which stimulates progression from G1 into S phase during mitosis. Inhibits geranylgeranyl transferase type II activity by blocking the association between RABGGTA and RABGGTB. The polypeptide is Protein tyrosine phosphatase type IVA 2 (Ptp4a2) (Mus musculus (Mouse)).